The sequence spans 220 residues: Dual specificity protein phosphatase 19 (220 aa).

Methionine 1 bears the N-acetylmethionine mark. The Tyrosine-protein phosphatase domain occupies 64 to 205 (QVGVIKPWLL…LRTYQVGKES (142 aa)). Cysteine 149 acts as the Phosphocysteine intermediate in catalysis.

This sequence belongs to the protein-tyrosine phosphatase family. Non-receptor class dual specificity subfamily.

It catalyses the reaction O-phospho-L-tyrosyl-[protein] + H2O = L-tyrosyl-[protein] + phosphate. It carries out the reaction O-phospho-L-seryl-[protein] + H2O = L-seryl-[protein] + phosphate. The catalysed reaction is O-phospho-L-threonyl-[protein] + H2O = L-threonyl-[protein] + phosphate. With respect to regulation, phosphatase activity is enhanced by Ca(2+) and Mn(2+). Its function is as follows. Has a dual specificity toward Ser/Thr and Tyr-containing proteins. The sequence is that of Dual specificity protein phosphatase 19 from Mus musculus (Mouse).